A 528-amino-acid polypeptide reads, in one-letter code: Esterase PE16 (528 aa).

The PE domain occupies 1 to 93 (MSFVFAVPEM…AGWYVDAEAA (93 aa)). The interval 94-143 (NAALVDTAATGASELGSGGRTALILGSTGTPRPPFDYMQQVYDRYIAPHY) is linker. Residues 149-369 (SGLYTPAQFQ…LRAIIELGYD (221 aa)) form the PE-PPE domain. S199 is a catalytic residue. Residues 503-523 (IALLVFAAGIPAVAAVAILTG) traverse the membrane as a helical segment.

This sequence belongs to the mycobacterial PE family.

It localises to the membrane. It carries out the reaction a hexanoate ester + H2O = an aliphatic alcohol + hexanoate + H(+). The enzyme catalyses an octanoate ester + H2O = an aliphatic alcohol + octanoate + H(+). It catalyses the reaction a butanoate ester + H2O = an aliphatic alcohol + butanoate + H(+). Esterase activity is significantly inhibited by the serine modifier phenylmethylsulfonyl fluoride (PMSF). Its function is as follows. Esterase that hydrolyzes short to medium chain fatty acid esters with the highest specific activity for p-nitrophenyl caproate (pNPC6). Has lower activity with p-nitrophenyl caprylate (pNPC8) and p-nitrophenyl butyrate (pNPC4). Has weak activity with p-nitrophenyl caprate (pNPC10) and p-nitrophenyl laurate (pNPC12). Does not possess lipolytic activity and cutinase activity. This chain is Esterase PE16, found in Mycobacterium tuberculosis (strain ATCC 25618 / H37Rv).